The primary structure comprises 291 residues: 5-hydroxytryptamine receptor 1D (291 aa).

The chain crosses the membrane as a helical span at residues 30–54 (LCDIWLSSDITCCTASILHLCVIAL). Cysteine 31 and cysteine 108 are disulfide-bonded. 2 residues coordinate serotonin: aspartate 38 and cysteine 42. Positions 55-57 (DRY) match the DRY motif; important for ligand-induced conformation changes motif. A helical membrane pass occupies residues 75-96 (AAAMIAIVWAISICISIPPLFW). N-linked (GlcNAc...) asparagine glycosylation occurs at asparagine 111. Helical transmembrane passes span 115 to 138 (ISYT…ILYG), 221 to 246 (KTLG…VLPI), and 256 to 279 (ALFD…YTVF). Serine 241 contributes to the serotonin binding site. An NPxxY motif; important for ligand-induced conformation changes and signaling motif is present at residues 272–276 (NPIIY).

The protein belongs to the G-protein coupled receptor 1 family. As to quaternary structure, homodimer. Heterodimer with HTR1B.

The protein resides in the cell membrane. Functionally, G-protein coupled receptor for 5-hydroxytryptamine (serotonin). Also functions as a receptor for ergot alkaloid derivatives, various anxiolytic and antidepressant drugs and other psychoactive substances. Ligand binding causes a conformation change that triggers signaling via guanine nucleotide-binding proteins (G proteins) and modulates the activity of downstream effectors, such as adenylate cyclase. HTR1D is coupled to G(i)/G(o) G alpha proteins and mediates inhibitory neurotransmission by inhibiting adenylate cyclase activity. Regulates the release of 5-hydroxytryptamine in the brain, and thereby affects neural activity. May also play a role in regulating the release of other neurotransmitters. May play a role in vasoconstriction. In Sus scrofa (Pig), this protein is 5-hydroxytryptamine receptor 1D (HTR1D).